Reading from the N-terminus, the 293-residue chain is MAAITASMVAELRAKTDAPMMECKKALTEADGDMAKAEELLRVKLGNKASKAASRVTAEGVVASFVGANAGALVELNCETDFVAKNDDFNAFAKTVAELVATQNPADVAALSALPLDGKTVDEVRLALVGKIGENISIRRFVRFETSNKLATYLHGSRIGVIVEYTGAQEQVGKDVAMHVAAMKPVSLSADEVPADLIEKERRVAEQKAAESGKPAEIVAKMVDGSVQKFLKEVSLLNQPFVKNDKQTIEQMLKAADAAVQKFALFVVGEGIEKRQDDFAAEVAAQVAAAKQQ.

The tract at residues Thr80 to Val83 is involved in Mg(2+) ion dislocation from EF-Tu.

The protein belongs to the EF-Ts family.

Its subcellular location is the cytoplasm. Associates with the EF-Tu.GDP complex and induces the exchange of GDP to GTP. It remains bound to the aminoacyl-tRNA.EF-Tu.GTP complex up to the GTP hydrolysis stage on the ribosome. The protein is Elongation factor Ts of Burkholderia pseudomallei (strain 1106a).